Reading from the N-terminus, the 339-residue chain is Biotin synthase (339 aa).

The 230-residue stretch at 47 to 276 (FYGKKVKLNM…SKEIRISGGR (230 aa)) folds into the Radical SAM core domain. C65, C69, and C72 together coordinate [4Fe-4S] cluster. Residues C109, C141, C201, and R271 each coordinate [2Fe-2S] cluster.

Belongs to the radical SAM superfamily. Biotin synthase family. Homodimer. The cofactor is [4Fe-4S] cluster. [2Fe-2S] cluster serves as cofactor.

The enzyme catalyses (4R,5S)-dethiobiotin + (sulfur carrier)-SH + 2 reduced [2Fe-2S]-[ferredoxin] + 2 S-adenosyl-L-methionine = (sulfur carrier)-H + biotin + 2 5'-deoxyadenosine + 2 L-methionine + 2 oxidized [2Fe-2S]-[ferredoxin]. It participates in cofactor biosynthesis; biotin biosynthesis; biotin from 7,8-diaminononanoate: step 2/2. Functionally, catalyzes the conversion of dethiobiotin (DTB) to biotin by the insertion of a sulfur atom into dethiobiotin via a radical-based mechanism. In Bacillus velezensis (strain DSM 23117 / BGSC 10A6 / LMG 26770 / FZB42) (Bacillus amyloliquefaciens subsp. plantarum), this protein is Biotin synthase.